The following is a 443-amino-acid chain: Probable glycine dehydrogenase (decarboxylating) subunit 1 (443 aa).

The protein belongs to the GcvP family. N-terminal subunit subfamily. As to quaternary structure, the glycine cleavage system is composed of four proteins: P, T, L and H. In this organism, the P 'protein' is a heterodimer of two subunits.

It carries out the reaction N(6)-[(R)-lipoyl]-L-lysyl-[glycine-cleavage complex H protein] + glycine + H(+) = N(6)-[(R)-S(8)-aminomethyldihydrolipoyl]-L-lysyl-[glycine-cleavage complex H protein] + CO2. Its function is as follows. The glycine cleavage system catalyzes the degradation of glycine. The P protein binds the alpha-amino group of glycine through its pyridoxal phosphate cofactor; CO(2) is released and the remaining methylamine moiety is then transferred to the lipoamide cofactor of the H protein. This chain is Probable glycine dehydrogenase (decarboxylating) subunit 1, found in Chloroherpeton thalassium (strain ATCC 35110 / GB-78).